Reading from the N-terminus, the 122-residue chain is Large ribosomal subunit protein uL14c (122 aa).

Belongs to the universal ribosomal protein uL14 family. In terms of assembly, part of the 50S ribosomal subunit.

The protein localises to the plastid. It localises to the chloroplast. Binds to 23S rRNA. This is Large ribosomal subunit protein uL14c from Chaetosphaeridium globosum (Charophycean green alga).